Reading from the N-terminus, the 376-residue chain is Queuine tRNA-ribosyltransferase (376 aa).

Asp-92 functions as the Proton acceptor in the catalytic mechanism. Substrate is bound by residues 92–96, Asp-146, Gln-190, and Gly-217; that span reads DSGGF. Residues 248–254 form an RNA binding region; sequence GVGRPED. Asp-267 functions as the Nucleophile in the catalytic mechanism. The interval 272-276 is RNA binding; important for wobble base 34 recognition; it reads TRNAR. 4 residues coordinate Zn(2+): Cys-305, Cys-307, Cys-310, and His-337.

Belongs to the queuine tRNA-ribosyltransferase family. As to quaternary structure, homodimer. Within each dimer, one monomer is responsible for RNA recognition and catalysis, while the other monomer binds to the replacement base PreQ1. Zn(2+) serves as cofactor.

It carries out the reaction 7-aminomethyl-7-carbaguanine + guanosine(34) in tRNA = 7-aminomethyl-7-carbaguanosine(34) in tRNA + guanine. It functions in the pathway tRNA modification; tRNA-queuosine biosynthesis. Catalyzes the base-exchange of a guanine (G) residue with the queuine precursor 7-aminomethyl-7-deazaguanine (PreQ1) at position 34 (anticodon wobble position) in tRNAs with GU(N) anticodons (tRNA-Asp, -Asn, -His and -Tyr). Catalysis occurs through a double-displacement mechanism. The nucleophile active site attacks the C1' of nucleotide 34 to detach the guanine base from the RNA, forming a covalent enzyme-RNA intermediate. The proton acceptor active site deprotonates the incoming PreQ1, allowing a nucleophilic attack on the C1' of the ribose to form the product. After dissociation, two additional enzymatic reactions on the tRNA convert PreQ1 to queuine (Q), resulting in the hypermodified nucleoside queuosine (7-(((4,5-cis-dihydroxy-2-cyclopenten-1-yl)amino)methyl)-7-deazaguanosine). The sequence is that of Queuine tRNA-ribosyltransferase from Stenotrophomonas maltophilia (strain R551-3).